A 59-amino-acid polypeptide reads, in one-letter code: Large ribosomal subunit protein bL32 (59 aa).

Residues 1 to 34 form a disordered region; sequence MAVQKSKVTRSRRGQRRSHDALTGPTLSVDKTTG. Basic residues predominate over residues 7 to 16; the sequence is KVTRSRRGQR.

It belongs to the bacterial ribosomal protein bL32 family.

The protein is Large ribosomal subunit protein bL32 of Marinomonas sp. (strain MWYL1).